We begin with the raw amino-acid sequence, 337 residues long: Glyceraldehyde-3-phosphate dehydrogenase 1, cytosolic (337 aa).

NAD(+)-binding positions include 13 to 14, Asp-35, and Arg-82; that span reads RI. Residues 153–155, Thr-184, 213–214, and Arg-236 each bind D-glyceraldehyde 3-phosphate; these read SCT and TG. The active-site Nucleophile is the Cys-154. Asn-318 serves as a coordination point for NAD(+).

It belongs to the glyceraldehyde-3-phosphate dehydrogenase family. As to quaternary structure, homotetramer. Phosphorylated after gibberellin treatment.

It is found in the cytoplasm. The enzyme catalyses D-glyceraldehyde 3-phosphate + phosphate + NAD(+) = (2R)-3-phospho-glyceroyl phosphate + NADH + H(+). Its pathway is carbohydrate degradation; glycolysis; pyruvate from D-glyceraldehyde 3-phosphate: step 1/5. In terms of biological role, key enzyme in glycolysis that catalyzes the first step of the pathway by converting D-glyceraldehyde 3-phosphate (G3P) into 3-phospho-D-glyceroyl phosphate. Essential for the maintenance of cellular ATP levels and carbohydrate metabolism. This Oryza sativa subsp. japonica (Rice) protein is Glyceraldehyde-3-phosphate dehydrogenase 1, cytosolic (GAPC1).